The chain runs to 282 residues: Bifunctional protein FolD (282 aa).

NADP(+) is bound by residues 164–166 and serine 189; that span reads GRS.

It belongs to the tetrahydrofolate dehydrogenase/cyclohydrolase family. In terms of assembly, homodimer.

It catalyses the reaction (6R)-5,10-methylene-5,6,7,8-tetrahydrofolate + NADP(+) = (6R)-5,10-methenyltetrahydrofolate + NADPH. It carries out the reaction (6R)-5,10-methenyltetrahydrofolate + H2O = (6R)-10-formyltetrahydrofolate + H(+). The protein operates within one-carbon metabolism; tetrahydrofolate interconversion. In terms of biological role, catalyzes the oxidation of 5,10-methylenetetrahydrofolate to 5,10-methenyltetrahydrofolate and then the hydrolysis of 5,10-methenyltetrahydrofolate to 10-formyltetrahydrofolate. This chain is Bifunctional protein FolD, found in Streptococcus suis (strain 98HAH33).